A 154-amino-acid polypeptide reads, in one-letter code: Ribosome maturation factor RimP (154 aa).

Belongs to the RimP family.

It localises to the cytoplasm. In terms of biological role, required for maturation of 30S ribosomal subunits. The polypeptide is Ribosome maturation factor RimP (Clostridium kluyveri (strain ATCC 8527 / DSM 555 / NBRC 12016 / NCIMB 10680 / K1)).